A 2115-amino-acid chain; its full sequence is Non-reducing polyketide synthase ascC (2115 aa).

Residues 1-21 (MTLIQTKHSASAAVFSPQSTA) are disordered. Residues 14-260 (VFSPQSTAPK…HNSRNTELAQ (247 aa)) form an N-terminal acylcarrier protein transacylase domain (SAT) region. A Ketosynthase family 3 (KS3) domain is found at 381–805 (PDSIAIVGSA…GSNSALICSE (425 aa)). Active-site for beta-ketoacyl synthase activity residues include cysteine 553, histidine 689, and histidine 728. Residues 908 to 1210 (LTFSGQSRTT…ANPSAHTFQA (303 aa)) are malonyl-CoA:ACP transacylase (MAT) domain. Catalysis depends on serine 995, which acts as the For acyl/malonyl transferase activity. Positions 1280–1406 (PKKVQQLVTL…GDFFATSGEM (127 aa)) are N-terminal hotdog fold. One can recognise a PKS/mFAS DH domain in the interval 1280 to 1581 (PKKVQQLVTL…FMRIKAAKLE (302 aa)). The tract at residues 1285-1580 (QLVTLKKTEG…QFMRIKAAKL (296 aa)) is product template (PT) domain. The Proton acceptor; for dehydratase activity role is filled by histidine 1315. The interval 1428–1581 (DAERLRTATA…FMRIKAAKLE (154 aa)) is C-terminal hotdog fold. The active-site Proton donor; for dehydratase activity is aspartate 1492. Residues 1587-1624 (ANPGSKTKSTNGNALPSVPRSVPAGPTSAPQQVAPTTM) form a disordered region. The segment covering 1588 to 1600 (NPGSKTKSTNGNA) has biased composition (polar residues). The Carrier domain occupies 1640-1724 (PSKIADLKSL…PTAALTEGLV (85 aa)). Serine 1674 carries the post-translational modification O-(pantetheine 4'-phosphoryl)serine. The span at 1734 to 1748 (SDSIRNSTGFHTTIP) shows a compositional bias: polar residues. The interval 1734–1767 (SDSIRNSTGFHTTIPATPAELHSNPPDSLDGSTV) is disordered. Residues 1777 to 2107 (ARFKLDTMVY…YDFLLGELEN (331 aa)) form a thioesterase (TE) domain region. Residues serine 1897 and aspartate 2045 each act as for thioesterase activity in the active site.

It carries out the reaction 3 malonyl-CoA + acetyl-CoA + 2 H(+) = orsellinate + 3 CO2 + 4 CoA. Its pathway is secondary metabolite biosynthesis; terpenoid biosynthesis. Non-reducing polyketide synthase; part of the asc-1 gene cluster that mediates the biosynthesis of both ascochlorin and ascofuranone, a strong inhibitor of cyanide-insensitive alternative oxidases and a promising drug candidate against African trypanosomiasis. The first step in the pathway is performed by the non-reducing polyketide synthase ascC that produces orsellinic acid by condensing acetyl-CoA with 3 malonyl-CoA units. Orsellinic acid is then prenylated by the prenyltransferase ascA to yield ilicicolinic acid B. Ilicicolinic acid B is further reduced to ilicicolin B by the reductase ascB. The halogenase ascD then chlorinates ilicicolin B to produce ilicicolin A which is converted to ilicicolin A epoxide by the cytochrome P450 monooxygenase ascE that catalyzes stereoselective epoxidation of the terminal double bond of the prenyl group. Ilicicolin A epoxide is the last common precursor for the biosynthesis of ascofuranone and ascochlorin. The terpene cyclase ascF produces a monocyclic terpene, and the cyclization reaction is proposed to be initiated by protonation of the terminal epoxide of ilicicolin A epoxide to generate a monocyclic tertiarycation, which is followed by a series of hydride and methyl shifts with abstraction of proton, leading to the formation of the (14S,15R,19R)-trimethylcyclohexanone ring structure of ilicicolin C, which is finally reduced to ascochlorin by the dehydrogenase ascG. On the other hand, ilicicolin A epoxide is hydroxylated by the cytochrome P450 monooxygenase ascH, and the resultant product is cyclized by the terpene cyclase ascI to ascofuranol via protonation-initiated epoxide ring opening, which facilitates the 6-endo-tet cyclization to form the tetrahy-drofuran ring. Finally, ascofuranol is oxidized into ascofuranone by ascJ. This is Non-reducing polyketide synthase ascC from Acremonium egyptiacum (Oospora egyptiaca).